The sequence spans 332 residues: Fructose-1,6-bisphosphatase class 1 (332 aa).

Residues glutamate 89, aspartate 110, leucine 112, and aspartate 113 each coordinate Mg(2+). Substrate is bound by residues 113–116, asparagine 206, tyrosine 239, 257–259, and lysine 269; these read DGSS and YLY. Glutamate 275 serves as a coordination point for Mg(2+).

The protein belongs to the FBPase class 1 family. As to quaternary structure, homotetramer. Requires Mg(2+) as cofactor.

The protein localises to the cytoplasm. The catalysed reaction is beta-D-fructose 1,6-bisphosphate + H2O = beta-D-fructose 6-phosphate + phosphate. It functions in the pathway carbohydrate biosynthesis; gluconeogenesis. The chain is Fructose-1,6-bisphosphatase class 1 from Salmonella typhimurium (strain LT2 / SGSC1412 / ATCC 700720).